Consider the following 103-residue polypeptide: Iron-sulfur cluster assembly protein CyaY (103 aa).

Belongs to the frataxin family.

In terms of biological role, involved in iron-sulfur (Fe-S) cluster assembly. May act as a regulator of Fe-S biogenesis. This Rickettsia rickettsii (strain Iowa) protein is Iron-sulfur cluster assembly protein CyaY.